An 855-amino-acid polypeptide reads, in one-letter code: Pre-mRNA-splicing factor SYF1 (855 aa).

9 HAT repeats span residues 15–47 (LVFE…FKQG), 48–80 (APKP…ARRA), 90–122 (PAYE…FLMD), 124–158 (GRVT…FLRS), 160–192 (PLPE…SSDR), 198–230 (QRLA…LISQ), 235–268 (VQSL…YYIR), 270–305 (GHFE…FEES), and 369–407 (GRPR…FYED). Lys-420 carries the N6-acetyllysine modification. HAT repeat units lie at residues 498 to 530 (GTFQ…FLEE), 532 to 566 (KYFE…KFIS), 571 to 605 (RKLE…LEEE), 643 to 677 (YGVT…MECK), and 679 to 713 (GEID…FEVR). Residues 808–855 (AELAQQANPEEIQLGEDEDEDEMDLEPNEVRLEQQSVPAAVFGSLKED) are disordered. A compositionally biased stretch (acidic residues) spans 820–834 (QLGEDEDEDEMDLEP). Ser-851 carries the post-translational modification Phosphoserine.

The protein belongs to the crooked-neck family. In terms of assembly, associates with RNA polymerase II, the TCR-specific proteins CKN1/CSA and ERCC6/CSB, and XPA. Identified in the spliceosome C complex. Component of the XAB2 complex, a multimeric protein complex composed of XAB2, PRPF19, AQR, ZNF830, ISY1, and PPIE. Identified in a pentameric intron-binding (IB) complex composed of AQR, XAB2, ISY1, ZNF830 and PPIE that is incorporated into the spliceosome as a preassembled complex. The IB complex does not contain PRPF19.

Its subcellular location is the nucleus. Its function is as follows. Involved in pre-mRNA splicing as component of the spliceosome. Involved in transcription-coupled repair (TCR), transcription and pre-mRNA splicing. This chain is Pre-mRNA-splicing factor SYF1 (Xab2), found in Mus musculus (Mouse).